Reading from the N-terminus, the 213-residue chain is ATP synthase peripheral stalk subunit OSCP, mitochondrial (213 aa).

The N-terminal 23 residues, 1-23, are a transit peptide targeting the mitochondrion; the sequence is MAALAVSGLSQQVRCFSTSVVRP. The SIFI-degron motif lies at 5–23; it reads AVSGLSQQVRCFSTSVVRP. Residues Lys-54, Lys-60, Lys-70, and Lys-73 each carry the N6-acetyllysine modification. Residue Lys-90 is modified to N6-succinyllysine. N6-acetyllysine; alternate is present on residues Lys-100, Lys-158, and Lys-162. N6-succinyllysine; alternate is present on residues Lys-100, Lys-158, and Lys-162. Lys-172, Lys-176, and Lys-192 each carry N6-acetyllysine. Lys-199 carries the post-translational modification N6-succinyllysine.

It belongs to the ATPase delta chain family. Component of the ATP synthase complex composed at least of ATP5F1A/subunit alpha, ATP5F1B/subunit beta, ATP5MC1/subunit c (homooctomer), MT-ATP6/subunit a, MT-ATP8/subunit 8, ATP5ME/subunit e, ATP5MF/subunit f, ATP5MG/subunit g, ATP5MK/subunit k, ATP5MJ/subunit j, ATP5F1C/subunit gamma, ATP5F1D/subunit delta, ATP5F1E/subunit epsilon, ATP5PF/subunit F6, ATP5PB/subunit b, ATP5PD/subunit d, ATP5PO/subunit OSCP. ATP synthase complex consists of a soluble F(1) head domain (subunits alpha(3) and beta(3)) - the catalytic core - and a membrane F(0) domain - the membrane proton channel (subunits c, a, 8, e, f, g, k and j). These two domains are linked by a central stalk (subunits gamma, delta, and epsilon) rotating inside the F1 region and a stationary peripheral stalk (subunits F6, b, d, and OSCP). Acetylation at Lys-162 decreases ATP production. Deacetylated by SIRT3. Post-translationally, in response to mitochondrial stress, the precursor protein is ubiquitinated by the SIFI complex in the cytoplasm before mitochondrial import, leading to its degradation. Within the SIFI complex, UBR4 initiates ubiquitin chain that are further elongated or branched by KCMF1.

Its subcellular location is the mitochondrion. It is found in the mitochondrion inner membrane. In terms of biological role, subunit OSCP, of the mitochondrial membrane ATP synthase complex (F(1)F(0) ATP synthase or Complex V) that produces ATP from ADP in the presence of a proton gradient across the membrane which is generated by electron transport complexes of the respiratory chain. ATP synthase complex consist of a soluble F(1) head domain - the catalytic core - and a membrane F(1) domain - the membrane proton channel. These two domains are linked by a central stalk rotating inside the F(1) region and a stationary peripheral stalk. During catalysis, ATP synthesis in the catalytic domain of F(1) is coupled via a rotary mechanism of the central stalk subunits to proton translocation. In vivo, can only synthesize ATP although its ATP hydrolase activity can be activated artificially in vitro. Part of the complex F(0) domain. Part of the complex F(0) domain and the peripheric stalk, which acts as a stator to hold the catalytic alpha(3)beta(3) subcomplex and subunit a/ATP6 static relative to the rotary elements. The chain is ATP synthase peripheral stalk subunit OSCP, mitochondrial from Bos taurus (Bovine).